The chain runs to 574 residues: Proline--tRNA ligase (574 aa).

The protein belongs to the class-II aminoacyl-tRNA synthetase family. ProS type 1 subfamily. In terms of assembly, homodimer.

It is found in the cytoplasm. It carries out the reaction tRNA(Pro) + L-proline + ATP = L-prolyl-tRNA(Pro) + AMP + diphosphate. Its function is as follows. Catalyzes the attachment of proline to tRNA(Pro) in a two-step reaction: proline is first activated by ATP to form Pro-AMP and then transferred to the acceptor end of tRNA(Pro). As ProRS can inadvertently accommodate and process non-cognate amino acids such as alanine and cysteine, to avoid such errors it has two additional distinct editing activities against alanine. One activity is designated as 'pretransfer' editing and involves the tRNA(Pro)-independent hydrolysis of activated Ala-AMP. The other activity is designated 'posttransfer' editing and involves deacylation of mischarged Ala-tRNA(Pro). The misacylated Cys-tRNA(Pro) is not edited by ProRS. The sequence is that of Proline--tRNA ligase from Thioalkalivibrio sulfidiphilus (strain HL-EbGR7).